A 374-amino-acid chain; its full sequence is Pre-B-cell leukemia transcription factor 4 (374 aa).

The 196-residue stretch at 14–209 (PRRLDTSDVL…VMTLRSRLLD (196 aa)) folds into the PBC domain. Residues 21–100 (DVLQQIMAIT…EGVCRPEKRG (80 aa)) form a PBC-A region. The tract at residues 103 to 209 (GAVARAGTAT…VMTLRSRLLD (107 aa)) is PBC-B. Positions 210-272 (ARRKRRNFSK…NKRIRYKKNM (63 aa)) form a DNA-binding region, homeobox; TALE-type. Positions 333-374 (QPPPGGGCLQSQAQGSWQGATPQPATASPAGDPGSINSSTSN) are disordered. The span at 341–358 (LQSQAQGSWQGATPQPAT) shows a compositional bias: polar residues.

Belongs to the TALE/PBX homeobox family.

It is found in the nucleus. This is Pre-B-cell leukemia transcription factor 4 (PBX4) from Homo sapiens (Human).